We begin with the raw amino-acid sequence, 247 residues long: uncharacterized protein (247 aa).

Its subcellular location is the mitochondrion. This is an uncharacterized protein from Schizosaccharomyces pombe (strain 972 / ATCC 24843) (Fission yeast).